Consider the following 374-residue polypeptide: Inner membrane transport permease YhhJ (374 aa).

The Cytoplasmic portion of the chain corresponds to 1–22 (MRHLRNIFNLGIKELRSLLGDK). A helical membrane pass occupies residues 23–43 (AMLTLIVFSFTVSVYSSATVT). The Periplasmic portion of the chain corresponds to 44–172 (PGSLNLAPIA…TRMRFNPNLD (129 aa)). The 237-residue stretch at 133–369 (NGYIQNIING…TIALLRFRKT (237 aa)) folds into the ABC transmembrane type-2 domain. The chain crosses the membrane as a helical span at residues 173 to 193 (PAWFGGVMAIINNITMLAIVL). Residues 194–229 (TGSALIREREHGTVEHLLVMPITPFEIMMAKIWSMG) lie on the Cytoplasmic side of the membrane. The chain crosses the membrane as a helical span at residues 230–250 (LVVLVVSGLSLVLMVKGVLGV). The Periplasmic segment spans residues 251–255 (PIEGS). Residues 256–276 (IPLFMLGVALSLFATTSIGIF) form a helical membrane-spanning segment. The Cytoplasmic segment spans residues 277–283 (MGTIARS). Residues 284-304 (MPQLGLLVILVLLPLQMLSGG) traverse the membrane as a helical segment. The Periplasmic segment spans residues 305-342 (STPRESMPQMVQDIMLTMPTTHFVSLAQAILYRGAGFE). The helical transmembrane segment at 343 to 363 (IVWPQFLTLMAIGGAFFTIAL) threads the bilayer. The Cytoplasmic segment spans residues 364 to 374 (LRFRKTIGTMA).

This sequence belongs to the ABC-2 integral membrane protein family.

It is found in the cell inner membrane. The sequence is that of Inner membrane transport permease YhhJ (yhhJ) from Escherichia coli (strain K12).